A 208-amino-acid chain; its full sequence is MKDLHWHGHATSRLARVEMNGHRPCTIWFTGLSGSGKSTIANALDGWLHRRGCHTYVLDGDNVRQGLNKDLGFSEQDRVENIRRVGEVAKLFNDAGLIVSCAFISPYEKDRHLVRQLLNEDEYVEVFLSTSLADCERRDPKGLYRKARAGELANFTGIDSPYEPPVRPNLAFDTSTHTVNEVVGAIFDYLVAKGIVRQHGAVGRASVG.

31–38 lines the ATP pocket; that stretch reads GLSGSGKS. Residue Ser-105 is the Phosphoserine intermediate of the active site.

This sequence belongs to the APS kinase family.

The enzyme catalyses adenosine 5'-phosphosulfate + ATP = 3'-phosphoadenylyl sulfate + ADP + H(+). Its pathway is sulfur metabolism; hydrogen sulfide biosynthesis; sulfite from sulfate: step 2/3. In terms of biological role, catalyzes the synthesis of activated sulfate. The sequence is that of Adenylyl-sulfate kinase from Pseudomonas entomophila (strain L48).